Reading from the N-terminus, the 140-residue chain is ATP synthase epsilon chain (140 aa).

Belongs to the ATPase epsilon chain family. As to quaternary structure, F-type ATPases have 2 components, CF(1) - the catalytic core - and CF(0) - the membrane proton channel. CF(1) has five subunits: alpha(3), beta(3), gamma(1), delta(1), epsilon(1). CF(0) has three main subunits: a, b and c.

The protein resides in the cell inner membrane. In terms of biological role, produces ATP from ADP in the presence of a proton gradient across the membrane. The sequence is that of ATP synthase epsilon chain from Marinobacter nauticus (strain ATCC 700491 / DSM 11845 / VT8) (Marinobacter aquaeolei).